A 225-amino-acid polypeptide reads, in one-letter code: MRSRFENERRRVIDYLRRIGIIRSDKVYRALLSVPREEFVPPQYREYAYIDEPLPIGFGQTISAIHMVAIMTEELDPEPGNIVLEIGTGSGYQAAVLAEIVAKQDPNRRGHVYTVERIPELAEFAKKNLERTGYIEYVTVIVGDGTKGYPEKAPYDRIIVTAAAPEVPKPLLKQLRVGGKLVIPVGDRFVQRLLSVKRVGEHEYVTKHGIECMFVPLIGEYGWKD.

Ser-63 is an active-site residue.

This sequence belongs to the methyltransferase superfamily. L-isoaspartyl/D-aspartyl protein methyltransferase family.

The protein localises to the cytoplasm. The catalysed reaction is [protein]-L-isoaspartate + S-adenosyl-L-methionine = [protein]-L-isoaspartate alpha-methyl ester + S-adenosyl-L-homocysteine. Functionally, catalyzes the methyl esterification of L-isoaspartyl residues in peptides and proteins that result from spontaneous decomposition of normal L-aspartyl and L-asparaginyl residues. It plays a role in the repair and/or degradation of damaged proteins. In Staphylothermus marinus (strain ATCC 43588 / DSM 3639 / JCM 9404 / F1), this protein is Protein-L-isoaspartate O-methyltransferase.